Reading from the N-terminus, the 201-residue chain is Ras-related protein Rab-1C (201 aa).

The tract at residues 1–20 (MGCSPSKEGNGSFSSTSTSF) is disordered. Glycine 2 is lipidated: N-myristoyl glycine. Cysteine 3 carries the S-palmitoyl cysteine lipid modification. GTP contacts are provided by residues 40 to 48 (GDSGVGKSC), 58 to 65 (FTDSYIST), 88 to 92 (DTAGQ), 146 to 149 (NKCD), and 176 to 178 (SAK). Residues 62-70 (YISTIGVDF) carry the Effector region motif.

This sequence belongs to the small GTPase superfamily. Rab family. In terms of processing, although this sequence lacks the C-terminal cysteine motifs subject to isoprenylation in other Rab proteins, it does have N-terminal myristoylation and S-palmitoylation sequence motifs.

The sequence is that of Ras-related protein Rab-1C (Rab1C) from Dictyostelium discoideum (Social amoeba).